The following is a 329-amino-acid chain: Phenylalanine--tRNA ligase alpha subunit (329 aa).

Glu-254 contacts Mg(2+).

Belongs to the class-II aminoacyl-tRNA synthetase family. Phe-tRNA synthetase alpha subunit type 1 subfamily. As to quaternary structure, tetramer of two alpha and two beta subunits. The cofactor is Mg(2+).

The protein resides in the cytoplasm. It catalyses the reaction tRNA(Phe) + L-phenylalanine + ATP = L-phenylalanyl-tRNA(Phe) + AMP + diphosphate + H(+). The polypeptide is Phenylalanine--tRNA ligase alpha subunit (Mannheimia succiniciproducens (strain KCTC 0769BP / MBEL55E)).